Reading from the N-terminus, the 922-residue chain is Centrosomal protein of 104 kDa (922 aa).

A coiled-coil region spans residues 210-277 (EVAQIIRRLD…DLAKEKKQQM (68 aa)). Residues 307 to 318 (PLQPLASPSSPQ) show a composition bias toward low complexity. 2 disordered regions span residues 307–333 (PLQPLASPSSPQHWKAVSSLPRTEELA) and 348–419 (LASS…PLTE). Residues 396-407 (PEVREADSDVRR) are compositionally biased toward basic and acidic residues. HEAT repeat units follow at residues 526–564 (AIPLLLARTGDSSARLRVMALNFIQEMALFKEVRSLQLI) and 601–637 (GFTVDNVMKFAVSALEHRVYEVRETAVRIILDMYRQH). Composition is skewed to basic and acidic residues over residues 673-697 (TEAEGKTQKRVVTKEAEKQKKEETK) and 714-725 (QEKENEAVKLKN). Disordered regions lie at residues 673–741 (TEAE…TPEI) and 880–922 (PAPQ…HTRR). Residues 678–705 (KTQKRVVTKEAEKQKKEETKALQGLSAA) adopt a coiled-coil conformation.

As to quaternary structure, interacts with CCP110 and CEP97. Interacts with ARMC9, TOGARAM1, CCDC66 and CSPP1. Expressed predominantly in the brain. Also detected, although at much lower levels, in the heart and the liver. Within the brain, expressed in the cerebral cortex, hippocampus, cerebellum and brainstem.

It is found in the cell projection. The protein localises to the cilium. It localises to the cytoplasm. Its subcellular location is the cytoskeleton. The protein resides in the microtubule organizing center. It is found in the centrosome. The protein localises to the centriole. It localises to the spindle pole. In terms of biological role, required for ciliogenesis and for structural integrity at the ciliary tip. The polypeptide is Centrosomal protein of 104 kDa (Cep104) (Rattus norvegicus (Rat)).